Here is a 591-residue protein sequence, read N- to C-terminus: Phosphoglucan phosphatase LSF1, chloroplastic (591 aa).

The transit peptide at 1–61 (MAFLQQISGL…RRRRVVLRVV (61 aa)) directs the protein to the chloroplast. Residues 291 to 453 (RYSKITEQIY…VDDGKHDGTP (163 aa)) enclose the Tyrosine-protein phosphatase domain. The Phosphocysteine intermediate role is filled by Cys-390. Substrate is bound at residue 390–396 (CTTGFDR).

Its subcellular location is the plastid. The protein resides in the chloroplast. Functionally, starch granule-associated phosphoglucan phosphatase involved in the control of starch accumulation. Participates in the regulation of the initial steps of starch degradation at the granule surface. May release a different set of phosphate groups from those removed by DSP4. This chain is Phosphoglucan phosphatase LSF1, chloroplastic (LSF1), found in Arabidopsis thaliana (Mouse-ear cress).